The chain runs to 281 residues: Src-like-adapter (281 aa).

Positions 1–20 (MGNSMKSTSPPSERPLSSSE) are disordered. Glycine 2 is lipidated: N-myristoyl glycine. Residues 7-20 (STSPPSERPLSSSE) are compositionally biased toward low complexity. Residues 22 to 82 (LESDFLAVLT…PGICVARVYH (61 aa)) form the SH3 domain. An SH2 domain is found at 84-175 (WLFEGLGRDK…GLCCVLTTPC (92 aa)). Residues 190–281 (CTSPGSPVTL…FFSAPQYFED (92 aa)) are SLA C-terminal. A Phosphoserine modification is found at serine 258. Tyrosine 278 is subject to Phosphotyrosine.

As to quaternary structure, homodimer. Interacts with phosphorylated CBL, SYK and LAT. Homodimerization and interaction with phosphorylated CBL occurs via its C-terminal domain. Interacts with PDGFRB and EPHA2. Interacts with phosphorylated proteins ZAP70; CD3Z; VAV1 and LCP2 via its SH2 domain. As to expression, predominantly expressed in lymphoid tissues. Highly expressed in spleen, thymus and lymph nodes. Weakly expressed in lung and brain. Expressed in T-cells and at low level in B-cells.

It localises to the cytoplasm. Its subcellular location is the endosome. Its function is as follows. Adapter protein, which negatively regulates T-cell receptor (TCR) signaling. Inhibits T-cell antigen-receptor induced activation of nuclear factor of activated T-cells. Involved in the negative regulation of positive selection and mitosis of T-cells. May act by linking signaling proteins such as ZAP70 with CBL, leading to a CBL dependent degradation of signaling proteins. The sequence is that of Src-like-adapter (Sla) from Mus musculus (Mouse).